Here is a 1147-residue protein sequence, read N- to C-terminus: Probable phospholipid-transporting ATPase IIB (1147 aa).

Residues 1 to 146 lie on the Cytoplasmic side of the membrane; that stretch reads MADQIPLYPV…NQKYNVFTFI (146 aa). Residues 147–168 form a helical membrane-spanning segment; it reads PGVLYEQFKFFLNLYFLVISCS. Topologically, residues 169–173 are extracellular; the sequence is QFVPA. A helical membrane pass occupies residues 174–196; that stretch reads LKIGYLYTYWAPLGFVLAVTMTR. Topologically, residues 197 to 380 are cytoplasmic; the sequence is EAIDEFRRFQ…GLLDLELNRL (184 aa). The chain crosses the membrane as a helical span at residues 381 to 401; it reads TKALFLALVALSIVMVTLQGF. The Extracellular portion of the chain corresponds to 402–409; the sequence is VGPWYRNL. A helical membrane pass occupies residues 410–431; it reads FRFLLLFSYIIPISLRVNLDMG. Residues 432–930 are Cytoplasmic-facing; sequence KAVYGWMMMK…GRNSYKRSAA (499 aa). Asp-468 acts as the 4-aspartylphosphate intermediate in catalysis. Residues Asp-468, Lys-469, and Thr-470 each coordinate ATP. Asp-468 is a binding site for Mg(2+). Mg(2+) is bound at residue Thr-470. A disordered region spans residues 503–535; sequence RDSYSQMQSQAGGNNTGSTPLRKAQSSAPKVRK. The segment covering 505-530 has biased composition (polar residues); it reads SYSQMQSQAGGNNTGSTPLRKAQSSA. The ATP site is built by Glu-591, Phe-633, Lys-638, Lys-657, Arg-686, Thr-687, Thr-766, Gly-767, Asp-768, Arg-848, and Lys-854. Asp-874 is a binding site for Mg(2+). ATP contacts are provided by Asn-877 and Asp-878. Asp-878 contacts Mg(2+). Residues 931–951 form a helical membrane-spanning segment; it reads LGQFVMHRGLIISTMQAVFSS. The Extracellular portion of the chain corresponds to 952–963; the sequence is VFYFASVPLYQG. Residues 964–982 form a helical membrane-spanning segment; the sequence is FLMVGYATIYTMFPVFSLV. Topologically, residues 983-1012 are cytoplasmic; the sequence is LDQDVKPEMAMLYPELYKDLTKGRSLSFKT. The helical transmembrane segment at 1013–1031 threads the bilayer; the sequence is FLIWVLISIYQGGILMYGA. Topologically, residues 1032–1038 are extracellular; it reads LVLFESE. A helical transmembrane segment spans residues 1039-1061; sequence FVHVVAISFTALILTELLMVALT. At 1062 to 1067 the chain is on the cytoplasmic side; it reads VRTWHW. The helical transmembrane segment at 1068–1088 threads the bilayer; that stretch reads LMVVAEFLSLGCYVSSLAFLN. The Extracellular portion of the chain corresponds to 1089 to 1105; sequence EYFGIGRVSFGAFLDVA. The chain crosses the membrane as a helical span at residues 1106 to 1130; the sequence is FITTVTFLWKVSAITVVSCLPLYVL. The Cytoplasmic segment spans residues 1131 to 1147; it reads KYLRRKLSPPSYCKLAS.

The protein belongs to the cation transport ATPase (P-type) (TC 3.A.3) family. Type IV subfamily. Requires Mg(2+) as cofactor.

The protein resides in the golgi apparatus. It localises to the trans-Golgi network membrane. It carries out the reaction ATP + H2O + phospholipidSide 1 = ADP + phosphate + phospholipidSide 2.. In Homo sapiens (Human), this protein is Probable phospholipid-transporting ATPase IIB (ATP9B).